Reading from the N-terminus, the 444-residue chain is Aflatoxin biosynthesis regulatory protein (444 aa).

The disordered stretch occupies residues 1–26 (MVDHISPRASPGPIRSSQTRRARKLR). Residues 29–56 (CTSCASSKVRCTKEKPACARCIERGLAC) constitute a DNA-binding region (zn(2)-C6 fungal-type). Positions 64–167 (MGRNPRAPSP…QGLGGDLAGQ (104 aa)) are disordered. Over residues 106–116 (TQAHTHAHSHP) the composition is skewed to basic residues. A compositionally biased stretch (low complexity) spans 120 to 130 (PQSHPQSNQPP). The segment covering 136–149 (PNGSSSVSAIFSHQ) has biased composition (polar residues).

Interacts with its co-regulator aflS.

Its subcellular location is the nucleus. The protein resides in the endosome. In terms of biological role, transcription factor involved in regulation of the aflatoxin biosynthesis gene cluster. Binds with its co-regulator aflS to AFLR1 elements (5'-TCGSWNNSCGR-3') present in the promoters of the aflatoxin cluster genes. The ratio of the expression data between aflS:aflR plays a crucial role in the regulation of aflatoxins production. A high ratio, produced at a range between 17 and 30 degrees Celsius, corresponds with the production profile of aflatoxin G1 biosynthesis. A low ratio, produced over 30 degrees Celsius, is related to aflatoxin B1 biosynthesis. The chain is Aflatoxin biosynthesis regulatory protein from Aspergillus parasiticus (strain ATCC 56775 / NRRL 5862 / SRRC 143 / SU-1).